Here is a 1390-residue protein sequence, read N- to C-terminus: DNA-directed RNA polymerase subunit beta (1390 aa).

The protein belongs to the RNA polymerase beta chain family. The RNAP catalytic core consists of 2 alpha, 1 beta, 1 beta' and 1 omega subunit. When a sigma factor is associated with the core the holoenzyme is formed, which can initiate transcription.

The catalysed reaction is RNA(n) + a ribonucleoside 5'-triphosphate = RNA(n+1) + diphosphate. Its function is as follows. DNA-dependent RNA polymerase catalyzes the transcription of DNA into RNA using the four ribonucleoside triphosphates as substrates. In Gluconobacter oxydans (strain 621H) (Gluconobacter suboxydans), this protein is DNA-directed RNA polymerase subunit beta.